A 160-amino-acid polypeptide reads, in one-letter code: Small ribosomal subunit protein uS9 (160 aa).

The protein belongs to the universal ribosomal protein uS9 family.

The protein is Small ribosomal subunit protein uS9 of Xanthobacter autotrophicus (strain ATCC BAA-1158 / Py2).